We begin with the raw amino-acid sequence, 193 residues long: Orotate phosphoribosyltransferase (193 aa).

A 5-phospho-alpha-D-ribose 1-diphosphate-binding site is contributed by 114-122; it reads EDVITTGGS. 2 residues coordinate orotate: Thr118 and Arg146.

It belongs to the purine/pyrimidine phosphoribosyltransferase family. PyrE subfamily. As to quaternary structure, homodimer. Mg(2+) is required as a cofactor.

The catalysed reaction is orotidine 5'-phosphate + diphosphate = orotate + 5-phospho-alpha-D-ribose 1-diphosphate. Its pathway is pyrimidine metabolism; UMP biosynthesis via de novo pathway; UMP from orotate: step 1/2. In terms of biological role, catalyzes the transfer of a ribosyl phosphate group from 5-phosphoribose 1-diphosphate to orotate, leading to the formation of orotidine monophosphate (OMP). This chain is Orotate phosphoribosyltransferase, found in Chlorobium phaeobacteroides (strain BS1).